The sequence spans 58 residues: Small ribosomal subunit protein bS21 (58 aa).

A disordered region spans residues 37-58 (FYEKPSVKRKKKSEAARKRKKF). Residues 43-58 (VKRKKKSEAARKRKKF) show a composition bias toward basic residues.

The protein belongs to the bacterial ribosomal protein bS21 family.

In Enterococcus faecalis (strain ATCC 700802 / V583), this protein is Small ribosomal subunit protein bS21.